Here is a 383-residue protein sequence, read N- to C-terminus: Ribosomal RNA large subunit methyltransferase G (383 aa).

Belongs to the methyltransferase superfamily. RlmG family.

The protein localises to the cytoplasm. The catalysed reaction is guanosine(1835) in 23S rRNA + S-adenosyl-L-methionine = N(2)-methylguanosine(1835) in 23S rRNA + S-adenosyl-L-homocysteine + H(+). In terms of biological role, specifically methylates the guanine in position 1835 (m2G1835) of 23S rRNA. The protein is Ribosomal RNA large subunit methyltransferase G of Vibrio atlanticus (strain LGP32) (Vibrio splendidus (strain Mel32)).